The sequence spans 317 residues: Protoheme IX farnesyltransferase (317 aa).

The next 9 membrane-spanning stretches (helical) occupy residues 36-56 (VMVLVIFTALVGMVVSDATVN), 57-77 (PVIAAISLLMIAVGAGASGCL), 108-128 (LAFGIVLSVGSVLILGLASNW), 129-149 (LAAGLLAFTIVFYAVIYSMWL), 157-177 (IVIGGAAGALPPVVGQAAVTG), 184-204 (LVLFAIIFIWTPPHFWALALV), 230-247 (IVWYSLLLAPLALVPVWL), 251-273 (GWLYAVVGVLGGLGMLAGAVQVY), and 284-304 (AAMGLFAFSILYLFLLFSALL).

Belongs to the UbiA prenyltransferase family. Protoheme IX farnesyltransferase subfamily.

Its subcellular location is the cell inner membrane. The enzyme catalyses heme b + (2E,6E)-farnesyl diphosphate + H2O = Fe(II)-heme o + diphosphate. Its pathway is porphyrin-containing compound metabolism; heme O biosynthesis; heme O from protoheme: step 1/1. Functionally, converts heme B (protoheme IX) to heme O by substitution of the vinyl group on carbon 2 of heme B porphyrin ring with a hydroxyethyl farnesyl side group. This chain is Protoheme IX farnesyltransferase, found in Methylorubrum populi (strain ATCC BAA-705 / NCIMB 13946 / BJ001) (Methylobacterium populi).